A 219-amino-acid polypeptide reads, in one-letter code: Lipid transferase CIDEB (219 aa).

Phosphothreonine is present on T18. The 77-residue stretch at 34–110 (PQRPFRVCDH…VLEQGQSWSP (77 aa)) folds into the CIDE-N domain.

Belongs to the CIDE family. In terms of assembly, interacts with DFFA. Interacts with DFFB; inhibited by DFFB. Interacts with APOB. Interacts with PREB/SEC12; facilitating loading of SCAP-SREBP into COPII vesicles. As to expression, highly enriched in the liver.

The protein resides in the lipid droplet. It localises to the endoplasmic reticulum membrane. The protein localises to the golgi apparatus. Its subcellular location is the cytoplasmic vesicle. It is found in the COPI-coated vesicle. Its function is as follows. Lipid transferase specifically expressed in hepatocytes, which promotes unilocular lipid droplet formation by mediating lipid droplet fusion. Lipid droplet fusion promotes their enlargement, restricting lipolysis and favoring lipid storage. Localizes on the lipid droplet surface, at focal contact sites between lipid droplets, and mediates atypical lipid droplet fusion by promoting directional net neutral lipid transfer from the smaller to larger lipid droplets. The transfer direction may be driven by the internal pressure difference between the contacting lipid droplet pair. Promotes lipid exchange and lipid droplet fusion in both small and large lipid droplet-containing hepatocytes. In addition to its role in lipid droplet fusion, also involved in cytoplasmic vesicle biogenesis and transport. Required for very-low-density lipoprotein (VLDL) lipidation and maturation. Probably involved in the biogenesis of VLDL transport vesicles by forming a COPII vesicle coat and facilitating the formation of endoplasmic reticulum-derived large vesicles. Also involved in sterol-regulated export of the SCAP-SREBP complex, composed of SCAP, SREBF1/SREBP1 and SREBF2/SREBP2, by promoting loading of SCAP-SREBP into COPII vesicles. May also activate apoptosis. This Mus musculus (Mouse) protein is Lipid transferase CIDEB.